The chain runs to 122 residues: Ribosome-binding factor A (122 aa).

Belongs to the RbfA family. Monomer. Binds 30S ribosomal subunits, but not 50S ribosomal subunits or 70S ribosomes.

Its subcellular location is the cytoplasm. Functionally, one of several proteins that assist in the late maturation steps of the functional core of the 30S ribosomal subunit. Associates with free 30S ribosomal subunits (but not with 30S subunits that are part of 70S ribosomes or polysomes). Required for efficient processing of 16S rRNA. May interact with the 5'-terminal helix region of 16S rRNA. This Halothermothrix orenii (strain H 168 / OCM 544 / DSM 9562) protein is Ribosome-binding factor A.